We begin with the raw amino-acid sequence, 298 residues long: Ribosomal RNA small subunit methyltransferase H (298 aa).

S-adenosyl-L-methionine-binding positions include 35–37, Asp-55, Phe-82, Asp-100, and Gln-107; that span reads GGH.

This sequence belongs to the methyltransferase superfamily. RsmH family.

Its subcellular location is the cytoplasm. It carries out the reaction cytidine(1402) in 16S rRNA + S-adenosyl-L-methionine = N(4)-methylcytidine(1402) in 16S rRNA + S-adenosyl-L-homocysteine + H(+). Specifically methylates the N4 position of cytidine in position 1402 (C1402) of 16S rRNA. The protein is Ribosomal RNA small subunit methyltransferase H of Chlamydia felis (strain Fe/C-56) (Chlamydophila felis).